A 192-amino-acid chain; its full sequence is Ribose 1,5-bisphosphate phosphokinase PhnN (192 aa).

ATP is bound at residue glycine 15 to aspartate 22.

The protein belongs to the ribose 1,5-bisphosphokinase family.

It catalyses the reaction alpha-D-ribose 1,5-bisphosphate + ATP = 5-phospho-alpha-D-ribose 1-diphosphate + ADP. Its pathway is metabolic intermediate biosynthesis; 5-phospho-alpha-D-ribose 1-diphosphate biosynthesis; 5-phospho-alpha-D-ribose 1-diphosphate from D-ribose 5-phosphate (route II): step 3/3. Its function is as follows. Catalyzes the phosphorylation of ribose 1,5-bisphosphate to 5-phospho-D-ribosyl alpha-1-diphosphate (PRPP). The protein is Ribose 1,5-bisphosphate phosphokinase PhnN of Brucella melitensis biotype 2 (strain ATCC 23457).